A 601-amino-acid chain; its full sequence is Deuterosome assembly protein 1 (601 aa).

3 coiled-coil regions span residues 14 to 59, 86 to 196, and 226 to 277; these read CEAE…NAQT, TQNY…GKKQ, and IEKL…ELQS. The disordered stretch occupies residues 305 to 329; it reads AQDNRKRVESSYSPSPKEAERKRKE. A coiled-coil region spans residues 354-397; it reads EEGLCSEQERLRSEISELTQELHQKEVTIATVMKKAALLERQLK. Ser544 is subject to Phosphoserine. Residues 555 to 586 adopt a coiled-coil conformation; sequence AAQHFLMEEERRAKELEKLLNTHIDELQRHTE.

The protein belongs to the CEP63 family. As to quaternary structure, interacts with CEP152; the interaction is mutually exclusive with CEP63. Highly enriched in multicilia-abundant tissues (trachea and oviduct).

The protein resides in the cytoplasm. In terms of biological role, key structural component of the deuterosome, a structure that promotes de novo centriole amplification in multiciliated cells. Deuterosome-mediated centriole amplification occurs in terminally differentiated multiciliated cells and can generate more than 100 centrioles. Probably sufficient for the specification and formation of the deuterosome inner core. Interacts with CEP152 and recruits PLK4 to activate centriole biogenesis. This Mus musculus (Mouse) protein is Deuterosome assembly protein 1.